A 360-amino-acid polypeptide reads, in one-letter code: MAALSLKGVRKSYDGAQYVLHGIDVDIADGEFVVLVGPSGCGKSTLLRMIAGLETVTEGEIAIGGRVVNTLEPKDRDIAMVFQNYALYPHMTVAQNMGYGLKIRGVERALIDARVQAAAQILELGPLLARRPRELSGGQRQRVAMGRAIVREPSVFLFDEPLSNLDAKLRVQMRLEIQRLHARLATTSVYVTHDQIEAMTLAQRVIVMNRGYAEQIGAPVDVYEKPATTFVASFIGSPAMNLLHGRLSEDGAAFDIADGPRLPVAGAAGAGREIAPGREWILGVRPEHMTPLPGAALATLAVDSCELLGADNLAHGRWGVHDVAVRLPHAMRPARGETLPVALPAQHLHFFDPATGKRAG.

The region spanning 4-235 (LSLKGVRKSY…PATTFVASFI (232 aa)) is the ABC transporter domain. Position 37–44 (37–44 (GPSGCGKS)) interacts with ATP.

The protein belongs to the ABC transporter superfamily. sn-glycerol-3-phosphate importer (TC 3.A.1.1.3) family. In terms of assembly, the complex is composed of two ATP-binding proteins (UgpC), two transmembrane proteins (UgpA and UgpE) and a solute-binding protein (UgpB).

Its subcellular location is the cell inner membrane. The enzyme catalyses sn-glycerol 3-phosphate(out) + ATP + H2O = sn-glycerol 3-phosphate(in) + ADP + phosphate + H(+). Its function is as follows. Part of the ABC transporter complex UgpBAEC involved in sn-glycerol-3-phosphate (G3P) import. Responsible for energy coupling to the transport system. The sequence is that of sn-glycerol-3-phosphate import ATP-binding protein UgpC from Burkholderia thailandensis (strain ATCC 700388 / DSM 13276 / CCUG 48851 / CIP 106301 / E264).